The following is a 164-amino-acid chain: Cyclin-dependent kinase inhibitor 1 (164 aa).

Residue S2 is modified to N-acetylserine. A Glycyl serine ester (Ser-Gly) (interchain with G-Cter in ubiquitin) cross-link involves residue S2. The C4-type zinc-finger motif lies at 13-41; it reads HGSKACRRLFGPVDSEQLRRDCDALMAGC. Residues 17–24 are required for binding cyclins; that stretch reads ACRRLFGP. Residues 53 to 58 are required for binding CDKs; it reads FVTETP. The tract at residues 80–164 is disordered; that stretch reads AGPRGGRDDL…RRLIFSKRKP (85 aa). Phosphoserine; by GSK3-beta is present on S114. S130 carries the post-translational modification Phosphoserine. The PIP-box K+4 motif signature appears at 140–164; it reads RKRRQTSMTDFYHSKRRLIFSKRKP. The short motif at 141-156 is the Nuclear localization signal element; it reads KRRQTSMTDFYHSKRR. Residue T145 is modified to Phosphothreonine; by PKA, PKB/AKT1, PIM1 and PIM2. Position 146 is a phosphoserine; by PKC and NUAK1 (S146). Residues 152-164 form an interaction with TRIM39 region; that stretch reads HSKRRLIFSKRKP. Basic residues predominate over residues 153 to 164; sequence SKRRLIFSKRKP. S160 carries the phosphoserine modification.

Belongs to the CDI family. As to quaternary structure, interacts with HDAC1; the interaction is prevented by competitive binding of C10orf90/FATS to HDAC1 facilitating acetylation and protein stabilization of CDKN1A/p21. Interacts with MKRN1. Interacts with PSMA3. Interacts with PCNA. Component of the ternary complex, cyclin D-CDK4-CDKN1A. Interacts (via its N-terminal domain) with CDK4; the interaction promotes the assembly of the cyclin D-CDK4 complex, its nuclear translocation and promotes the cyclin D-dependent enzyme activity of CDK4. Binding to CDK2 leads to CDK2/cyclin E inactivation at the G1-S phase DNA damage checkpoint, thereby arresting cells at the G1-S transition during DNA repair. Interacts with PIM1. Interacts with STK11 and NUAK1. Interacts with DTL and TRIM39. Interacts with PKP3; the interaction sequesters CDKN1A to the cytoplasm thereby repressing its role as an inhibitor of CDK4- and CDK6-driven RB1 phosphorylation. Phosphorylation of Thr-145 by Akt or of Ser-146 by PKC impairs binding to PCNA. Phosphorylation at Ser-114 by GSK3-beta enhances ubiquitination by the DCX(DTL) complex. Phosphorylation of Thr-145 by PIM2 enhances protein stability and inhibits cell proliferation. Phosphorylation of Thr-145 by PIM1 results in the relocation of CDKN1A to the cytoplasm and enhanced CDKN1A protein stability. UV radiation-induced phosphorylation at Ser-146 by NUAK1 leads to its degradation. Post-translationally, ubiquitinated by MKRN1; leading to polyubiquitination and 26S proteasome-dependent degradation. Ubiquitinated by the DCX(DTL) complex, also named CRL4(CDT2) complex, leading to its degradation during S phase or following UV irradiation. Ubiquitination by the DCX(DTL) complex is essential to control replication licensing and is PCNA-dependent: interacts with PCNA via its PIP-box, while the presence of the containing the 'K+4' motif in the PIP box, recruit the DCX(DTL) complex, leading to its degradation. Ubiquitination at Ser-2 leads to degradation by the proteasome pathway. Ubiquitinated by RNF114; leading to proteasomal degradation. In terms of processing, acetylation leads to protein stability. Acetylated in vitro on Lys-141, Lys-154, Lys-161 and Lys-163. Deacetylation by HDAC1 is prevented by competitive binding of C10orf90/FATS to HDAC1.

It localises to the cytoplasm. The protein localises to the nucleus. Its function is as follows. May be involved in p53/TP53 mediated inhibition of cellular proliferation in response to DNA damage. Binds to and inhibits cyclin-dependent kinase activity, preventing phosphorylation of critical cyclin-dependent kinase substrates and blocking cell cycle progression. Functions in the nuclear localization and assembly of cyclin D-CDK4 complex and promotes its kinase activity towards RB1. At higher stoichiometric ratios, inhibits the kinase activity of the cyclin D-CDK4 complex. Inhibits DNA synthesis by DNA polymerase delta by competing with POLD3 for PCNA binding. Plays an important role in controlling cell cycle progression and DNA damage-induced G2 arrest. Negatively regulates the CDK4- and CDK6-driven phosphorylation of RB1 in keratinocytes, thereby resulting in the release of E2F1 and subsequent transcription of E2F1-driven G1/S phase promoting genes. The polypeptide is Cyclin-dependent kinase inhibitor 1 (CDKN1A) (Felis catus (Cat)).